Consider the following 103-residue polypeptide: Small ribosomal subunit protein uS10 (103 aa).

It belongs to the universal ribosomal protein uS10 family. In terms of assembly, part of the 30S ribosomal subunit.

Its function is as follows. Involved in the binding of tRNA to the ribosomes. The protein is Small ribosomal subunit protein uS10 of Aliivibrio fischeri (strain ATCC 700601 / ES114) (Vibrio fischeri).